Reading from the N-terminus, the 627-residue chain is MACPF domain-containing protein At1g14780 (627 aa).

The region spanning 1–339 is the MACPF domain; the sequence is MSRDGGDVIE…PPLMDLQYFL (339 aa).

Belongs to the complement C6/C7/C8/C9 (TC 1.C.39) family.

Negatively controls the salicylic acid (SA)-mediated pathway of programmed cell death in plant immunity. The polypeptide is MACPF domain-containing protein At1g14780 (Arabidopsis thaliana (Mouse-ear cress)).